We begin with the raw amino-acid sequence, 269 residues long: Regulating synaptic membrane exocytosis protein 4 (269 aa).

Residues 115–233 (PMGDVEIGLQ…DLTTLAVGWY (119 aa)) enclose the C2 domain. Serine 254 and serine 257 each carry phosphoserine.

As to quaternary structure, binds PPFIA3. Does not bind RAB3.

The protein resides in the synapse. Its function is as follows. Regulates synaptic membrane exocytosis. This chain is Regulating synaptic membrane exocytosis protein 4 (Rims4), found in Mus musculus (Mouse).